A 403-amino-acid polypeptide reads, in one-letter code: Phosphopentomutase (403 aa).

Residues D13, D298, H303, D339, H340, and H351 each coordinate Mn(2+).

It belongs to the phosphopentomutase family. Mn(2+) serves as cofactor.

The protein resides in the cytoplasm. The enzyme catalyses 2-deoxy-alpha-D-ribose 1-phosphate = 2-deoxy-D-ribose 5-phosphate. It carries out the reaction alpha-D-ribose 1-phosphate = D-ribose 5-phosphate. The protein operates within carbohydrate degradation; 2-deoxy-D-ribose 1-phosphate degradation; D-glyceraldehyde 3-phosphate and acetaldehyde from 2-deoxy-alpha-D-ribose 1-phosphate: step 1/2. Isomerase that catalyzes the conversion of deoxy-ribose 1-phosphate (dRib-1-P) and ribose 1-phosphate (Rib-1-P) to deoxy-ribose 5-phosphate (dRib-5-P) and ribose 5-phosphate (Rib-5-P), respectively. This Streptococcus pneumoniae (strain JJA) protein is Phosphopentomutase.